A 213-amino-acid polypeptide reads, in one-letter code: Glycerol-3-phosphate acyltransferase (213 aa).

A run of 5 helical transmembrane segments spans residues 3–23 (LLLF…LWIG), 68–88 (ILLP…GFFA), 112–132 (VLLG…VLVL), 134–154 (LFSM…LSVL), and 163–183 (LPNY…IIII).

This sequence belongs to the PlsY family. As to quaternary structure, probably interacts with PlsX.

It is found in the cell membrane. It catalyses the reaction an acyl phosphate + sn-glycerol 3-phosphate = a 1-acyl-sn-glycero-3-phosphate + phosphate. Its pathway is lipid metabolism; phospholipid metabolism. Functionally, catalyzes the transfer of an acyl group from acyl-phosphate (acyl-PO(4)) to glycerol-3-phosphate (G3P) to form lysophosphatidic acid (LPA). This enzyme utilizes acyl-phosphate as fatty acyl donor, but not acyl-CoA or acyl-ACP. The sequence is that of Glycerol-3-phosphate acyltransferase from Streptococcus pyogenes serotype M28 (strain MGAS6180).